A 261-amino-acid chain; its full sequence is MAHSDWGYDSPNGPZEWVKLYPIANGNNQSPIDIKTSETKHDTSLKPFSVSYDPATAKEIVNVGHSFQVKFEDSDNRSVLKDGPLPGSYRLVQFHFHWGSTDDYGSEHTVDGVKYSAELHLVHWNSSKYSSFDEASSQADGLAILGVLMKVGEANPKLQKVLDALNEVKTKGKKAPFKNFDPSSLLPSSPDYWTYSGSLTHPPLYESVTWIVCKENISISSQQLSQFRSLLSNVEGGKAVPIQHNNRPPQPLKGRTVRAFF.

At Ala2 the chain carries N-acetylalanine. Residues 4–261 (SDWGYDSPNG…LKGRTVRAFF (258 aa)) form the Alpha-carbonic anhydrase domain. His65 functions as the Proton donor/acceptor in the catalytic mechanism. Residues His95, His97, and His120 each coordinate Zn(2+). Substrate is bound by residues Thr200 and 200–201 (TH).

It belongs to the alpha-carbonic anhydrase family. Zn(2+) serves as cofactor.

Its subcellular location is the cytoplasm. The enzyme catalyses hydrogencarbonate + H(+) = CO2 + H2O. It carries out the reaction urea = cyanamide + H2O. Its activity is regulated as follows. Inhibited by acetazolamide. Its function is as follows. Catalyzes the reversible hydration of carbon dioxide. Can hydrate cyanamide to urea. This chain is Carbonic anhydrase 1 (CA1), found in Equus caballus (Horse).